A 361-amino-acid polypeptide reads, in one-letter code: Peptide chain release factor 1 (361 aa).

Gln235 is modified (N5-methylglutamine).

This sequence belongs to the prokaryotic/mitochondrial release factor family. Methylated by PrmC. Methylation increases the termination efficiency of RF1.

It is found in the cytoplasm. Its function is as follows. Peptide chain release factor 1 directs the termination of translation in response to the peptide chain termination codons UAG and UAA. The chain is Peptide chain release factor 1 from Azoarcus sp. (strain BH72).